We begin with the raw amino-acid sequence, 1293 residues long: Phosphoribosylformylglycinamidine synthase (1293 aa).

ATP contacts are provided by residues 308–319 (GAATGAGGEIRD) and Ala675. Positions 676, 715, 719, and 883 each coordinate Mg(2+). Ser885 serves as a coordination point for ATP. Positions 1040-1293 (MAILREQGVN…MFRNARKFIG (254 aa)) constitute a Glutamine amidotransferase type-1 domain. Catalysis depends on Cys1133, which acts as the Nucleophile. Residues His1258 and Glu1260 contribute to the active site.

It in the N-terminal section; belongs to the FGAMS family. Monomer.

The protein resides in the cytoplasm. The catalysed reaction is N(2)-formyl-N(1)-(5-phospho-beta-D-ribosyl)glycinamide + L-glutamine + ATP + H2O = 2-formamido-N(1)-(5-O-phospho-beta-D-ribosyl)acetamidine + L-glutamate + ADP + phosphate + H(+). It participates in purine metabolism; IMP biosynthesis via de novo pathway; 5-amino-1-(5-phospho-D-ribosyl)imidazole from N(2)-formyl-N(1)-(5-phospho-D-ribosyl)glycinamide: step 1/2. Functionally, phosphoribosylformylglycinamidine synthase involved in the purines biosynthetic pathway. Catalyzes the ATP-dependent conversion of formylglycinamide ribonucleotide (FGAR) and glutamine to yield formylglycinamidine ribonucleotide (FGAM) and glutamate. The chain is Phosphoribosylformylglycinamidine synthase from Methylobacillus flagellatus (strain ATCC 51484 / DSM 6875 / VKM B-1610 / KT).